The primary structure comprises 276 residues: Large ribosomal subunit protein uL2 (276 aa).

Disordered regions lie at residues 35–58 and 218–276; these read RKLS…GGGH and RPIT…KNRK. A compositionally biased stretch (basic residues) spans 255–276; it reads RRPKKASNKMIVRRRPNGKNRK.

Belongs to the universal ribosomal protein uL2 family. As to quaternary structure, part of the 50S ribosomal subunit. Forms a bridge to the 30S subunit in the 70S ribosome.

In terms of biological role, one of the primary rRNA binding proteins. Required for association of the 30S and 50S subunits to form the 70S ribosome, for tRNA binding and peptide bond formation. It has been suggested to have peptidyltransferase activity; this is somewhat controversial. Makes several contacts with the 16S rRNA in the 70S ribosome. This Bifidobacterium adolescentis (strain ATCC 15703 / DSM 20083 / NCTC 11814 / E194a) protein is Large ribosomal subunit protein uL2.